Reading from the N-terminus, the 562-residue chain is Sulfite reductase [NADPH] hemoprotein beta-component (562 aa).

The [4Fe-4S] cluster site is built by C426, C432, C471, and C475. Residue C475 participates in siroheme binding.

This sequence belongs to the nitrite and sulfite reductase 4Fe-4S domain family. Alpha(8)-beta(8). The alpha component is a flavoprotein, the beta component is a hemoprotein. Requires siroheme as cofactor. [4Fe-4S] cluster serves as cofactor.

It carries out the reaction hydrogen sulfide + 3 NADP(+) + 3 H2O = sulfite + 3 NADPH + 4 H(+). Its pathway is sulfur metabolism; hydrogen sulfide biosynthesis; hydrogen sulfide from sulfite (NADPH route): step 1/1. Component of the sulfite reductase complex that catalyzes the 6-electron reduction of sulfite to sulfide. This is one of several activities required for the biosynthesis of L-cysteine from sulfate. This is Sulfite reductase [NADPH] hemoprotein beta-component from Shewanella denitrificans (strain OS217 / ATCC BAA-1090 / DSM 15013).